Here is a 690-residue protein sequence, read N- to C-terminus: MPYLYRAPGPQAHPVPKDARITHSSGQSFEQMRQECLQRGTLFEDADFPASNSSLFYSERPQIPFVWKRPGEIVKNPEFILGGATRTDICQGELGDCWLLAAIASLTLNQKALARVIPQDQSFGPGYAGIFHFQFWQHSEWLDVVIDDRLPTFRDRLVFLHSADHNEFWSALLEKAYAKLNGSYEALKGGSAIEAMEDFTGGVAETFQTKEAPENFYEILEKALKRGSLLGCFIDTRSAAESEARTPFGLIKGHAYSVTGIDQVSFRGQRIELIRIRNPWGQVEWNGSWSDSSPEWRSVGPAEQKRLCHTALDDGEFWMAFKDFKAHFDKVEICNLTPDALEEDAIHKWEVTVHQGSWVRGSTAGGCRNFLDTFWTNPQIKLSLTEKDEGQEECSFLVALMQKDRRKLKRFGANVLTIGYAIYECPDKDEHLNKDFFRYHASRARSKTFINLREVSDRFKLPPGEYILIPSTFEPHQEADFCLRIFSEKKAITRDMDGNVDIDLPEPPKPTPPDQETEEEQRFRALFEQVAGEDMEVTAEELEYVLNAVLQKKKDIKFKKLSLISCKNIISLMDTSGNGKLEFDEFKVFWDKLKQWINLFLRFDADKSGTMSTYELRTALKAAGFQLSSHLLQLIVLRYADEELQLDFDDFLNCLVRLENASRVFQALSTKNKEFIHLNINEFIHLTMNI.

Residues 1–24 (MPYLYRAPGPQAHPVPKDARITHS) form a disordered region. One can recognise a Calpain catalytic domain in the interval 42 to 337 (LFEDADFPAS…FDKVEICNLT (296 aa)). Leu-81, Gly-83, and Asp-88 together coordinate Ca(2+). The active site involves Cys-97. Glu-167 contributes to the Ca(2+) binding site. Residues His-254 and Asn-278 contribute to the active site. Ca(2+) contacts are provided by Glu-284, Asp-291, Leu-312, Asp-314, and Glu-316. Residues 338–521 (PDALEEDAIH…PPDQETEEEQ (184 aa)) are domain III. The tract at residues 498–519 (GNVDIDLPEPPKPTPPDQETEE) is disordered. EF-hand domains lie at 518–552 (EEEQRFRALFEQVAGEDMEVTAEELEYVLNAVLQK), 561–589 (LSLISCKNIISLMDTSGNGKLEFDEFKVF), and 591–626 (DKLKQWINLFLRFDADKSGTMSTYELRTALKAAGFQ). The tract at residues 522–690 (RFRALFEQVA…NEFIHLTMNI (169 aa)) is domain IV. Residues Asp-574, Ser-576, Asn-578, Lys-580, Glu-585, Asp-604, Asp-606, Ser-608, Thr-610, and Glu-615 each contribute to the Ca(2+) site.

The protein belongs to the peptidase C2 family. As to expression, expressed predominantly in stomach.

Its function is as follows. Calcium-regulated non-lysosomal thiol-protease. This chain is Calpain-9 (CAPN9), found in Homo sapiens (Human).